The sequence spans 423 residues: F-box protein At1g52495 (423 aa).

An F-box domain is found at 49-95 (KLKDVHLPLDLIVEILKKLPTKSLMRFRCVSKPWSFIISKRRDFVES).

The polypeptide is F-box protein At1g52495 (Arabidopsis thaliana (Mouse-ear cress)).